Reading from the N-terminus, the 452-residue chain is Type II methyltransferase M.EcaI (452 aa).

Belongs to the N(4)/N(6)-methyltransferase family.

It catalyses the reaction a 2'-deoxyadenosine in DNA + S-adenosyl-L-methionine = an N(6)-methyl-2'-deoxyadenosine in DNA + S-adenosyl-L-homocysteine + H(+). A beta subtype methylase, recognizes the double-stranded sequence 5'-GGTNACC-3', methylates A-5 on both strands and protects the DNA from cleavage by the EcaI endonuclease. The chain is Type II methyltransferase M.EcaI (ecaIM) from Enterobacter cloacae.